The sequence spans 76 residues: Sec-independent protein translocase protein TatA (76 aa).

A helical transmembrane segment spans residues 1 to 21 (MGSFSIWHWLVVLAIVVLVFG). A disordered region spans residues 41 to 76 (EGMKGAEEESTPPPPAQQVTGHSIKSEIEEKDQTKV). Over residues 64-76 (IKSEIEEKDQTKV) the composition is skewed to basic and acidic residues.

It belongs to the TatA/E family. As to quaternary structure, the Tat system comprises two distinct complexes: a TatABC complex, containing multiple copies of TatA, TatB and TatC subunits, and a separate TatA complex, containing only TatA subunits. Substrates initially bind to the TatABC complex, which probably triggers association of the separate TatA complex to form the active translocon.

Its subcellular location is the cell inner membrane. Its function is as follows. Part of the twin-arginine translocation (Tat) system that transports large folded proteins containing a characteristic twin-arginine motif in their signal peptide across membranes. TatA could form the protein-conducting channel of the Tat system. The protein is Sec-independent protein translocase protein TatA of Nitrosomonas europaea (strain ATCC 19718 / CIP 103999 / KCTC 2705 / NBRC 14298).